The primary structure comprises 260 residues: Snake venom serine proteinase 4a (260 aa).

An N-terminal signal peptide occupies residues 1–18 (MVLIRVLANLLILQLSYA). Positions 19 to 24 (QMSSEL) are excised as a propeptide. Positions 25–251 (VTGGDECNRN…HLDWIQRIIA (227 aa)) constitute a Peptidase S1 domain. 6 disulfide bridges follow: Cys-31-Cys-163, Cys-50-Cys-66, Cys-98-Cys-258, Cys-142-Cys-212, Cys-174-Cys-191, and Cys-202-Cys-227. His-65 acts as the Charge relay system in catalysis. N-linked (GlcNAc...) asparagine glycosylation is present at Asn-103. The active-site Charge relay system is the Asp-110. Ser-206 serves as the catalytic Charge relay system.

This sequence belongs to the peptidase S1 family. Snake venom subfamily. Monomer. Expressed by the venom gland.

The protein localises to the secreted. Its function is as follows. Snake venom serine protease that may act in the hemostasis system of the prey. This chain is Snake venom serine proteinase 4a, found in Crotalus adamanteus (Eastern diamondback rattlesnake).